A 527-amino-acid polypeptide reads, in one-letter code: Bifunctional purine biosynthesis protein PurH (527 aa).

An MGS-like domain is found at 8–156 (AGAKRPIRRA…KNHPSVAVVV (149 aa)).

The protein belongs to the PurH family.

It catalyses the reaction (6R)-10-formyltetrahydrofolate + 5-amino-1-(5-phospho-beta-D-ribosyl)imidazole-4-carboxamide = 5-formamido-1-(5-phospho-D-ribosyl)imidazole-4-carboxamide + (6S)-5,6,7,8-tetrahydrofolate. The catalysed reaction is IMP + H2O = 5-formamido-1-(5-phospho-D-ribosyl)imidazole-4-carboxamide. Its pathway is purine metabolism; IMP biosynthesis via de novo pathway; 5-formamido-1-(5-phospho-D-ribosyl)imidazole-4-carboxamide from 5-amino-1-(5-phospho-D-ribosyl)imidazole-4-carboxamide (10-formyl THF route): step 1/1. It functions in the pathway purine metabolism; IMP biosynthesis via de novo pathway; IMP from 5-formamido-1-(5-phospho-D-ribosyl)imidazole-4-carboxamide: step 1/1. The polypeptide is Bifunctional purine biosynthesis protein PurH (Mycobacterium sp. (strain KMS)).